Here is a 472-residue protein sequence, read N- to C-terminus: H(+)/Cl(-) exchange transporter ClcA (472 aa).

Residues 1 to 32 (MKAETPSFEAHQFVRVRRGDAVRRLIQRDKTP) lie on the Cytoplasmic side of the membrane. Residues 33–69 (LAVLLMAAVVGTLAGLVGVAFEKSVNWVQNQRIGALA) traverse the membrane as a helical segment. Residues 70–76 (QVADHWY) are Periplasmic-facing. Residues 77 to 100 (LVWPLAFILSALLAMVGYFLVRRF) form a helical membrane-spanning segment. Positions 106 to 110 (GSGIP) match the Selectivity filter part_1 motif. Chloride is bound at residue S107. Residues 109-116 (IPEIEGAL) constitute an intramembrane region (helical). The Cytoplasmic portion of the chain corresponds to 117–123 (EELRPVR). The next 2 helical transmembrane spans lie at 124–141 (WWRV…TLGA) and 148–166 (EGPM…LDIF). A Selectivity filter part_2 motif is present at residues 146-150 (GREGP). Over 167 to 176 (RMRSPEARHT) the chain is Cytoplasmic. 2 intramembrane regions (helical) span residues 177–189 (LLAT…LSAA) and 193–201 (PLAGILFII). Topologically, residues 202 to 214 (EEMRPQFRYNLIS) are cytoplasmic. A helical membrane pass occupies residues 215–232 (IKAVFTGVIMSSIVFRIF). Over 233–252 (NGEAAIIEVGKLSNAPVNTL) the chain is Periplasmic. The helical transmembrane segment at 253–281 (WLYLVLGMLFGCFGPLFNFLVLRTQDIFQ) threads the bilayer. Residues 282–287 (RIHGGN) lie on the Cytoplasmic side of the membrane. A helical membrane pass occupies residues 288 to 309 (IKTWVLMGGVIGGICGLLGLMQ). The Periplasmic segment spans residues 310–329 (PSAVGGGFNLIPIAAAGNFS). A run of 2 helical transmembrane segments spans residues 330–349 (VGLL…ICFS) and 355–376 (GIFA…MAAI). A Selectivity filter part_3 motif is present at residues 355 to 359 (GIFAP). The chloride site is built by I356 and F357. Over 377-386 (PLFPAYHLDA) the chain is Periplasmic. The segment at residues 387–401 (GTFAIAGMGALLAAS) is an intramembrane region (helical). The segment at residues 402-404 (VRA) is an intramembrane region (note=Loop between two helices). An intramembrane region (helical) is located at residues 405-416 (PLTGIVLVLEMT). Residues 417 to 421 (DNYQL) constitute an intramembrane region (note=Loop between two helices). Residues 422–438 (ILPMIITCLGATLLAQF) form a helical membrane-spanning segment. The Cytoplasmic segment spans residues 439-472 (LGGKPLYSTILQRTLAKQEAEQAAKAQQAPRENT). Y445 is a binding site for chloride.

Belongs to the chloride channel (TC 2.A.49) family. ClcA subfamily. As to quaternary structure, homodimer.

It localises to the cell inner membrane. It carries out the reaction 2 chloride(in) + H(+)(out) = 2 chloride(out) + H(+)(in). Proton-coupled chloride transporter. Functions as antiport system and exchanges two chloride ions for 1 proton. Probably acts as an electrical shunt for an outwardly-directed proton pump that is linked to amino acid decarboxylation, as part of the extreme acid resistance (XAR) response. In Klebsiella pneumoniae (strain 342), this protein is H(+)/Cl(-) exchange transporter ClcA.